The following is a 269-amino-acid chain: Mitochondrial S-adenosylmethionine carrier protein (269 aa).

Solcar repeat units lie at residues 4 to 77, 85 to 167, and 176 to 264; these read REFC…AKQL, LSPI…LKDL, and VDSW…VRTL. Helical transmembrane passes span 5–25, 49–69, 84–104, 141–161, 181–201, and 237–257; these read EFCA…LILF, IYAG…AFFV, YLSP…ACLI, RGYK…FPLW, SAVC…PLDV, and FAGV…FLGA.

Belongs to the mitochondrial carrier (TC 2.A.29) family.

The protein localises to the mitochondrion inner membrane. It catalyses the reaction S-adenosyl-L-homocysteine(out) + S-adenosyl-L-methionine(in) = S-adenosyl-L-homocysteine(in) + S-adenosyl-L-methionine(out). In terms of biological role, mitochondrial S-adenosyl-L-methionine/S-adenosyl-L-homocysteine antiporter. Mediates the exchange of cytosolic S-adenosyl-L-methionine, the predominant methyl-group donor for macromolecule methylation processes, for mitochondrial S-adenosylhomocysteine(SAH), a by-product of methylation reactions. The polypeptide is Mitochondrial S-adenosylmethionine carrier protein (slc25a26) (Xenopus tropicalis (Western clawed frog)).